We begin with the raw amino-acid sequence, 356 residues long: UDP-N-acetylglucosamine--N-acetylmuramyl-(pentapeptide) pyrophosphoryl-undecaprenol N-acetylglucosamine transferase (356 aa).

Residues 14–16 (TGG), Asn126, Arg162, Ser190, Ile244, and Gln289 contribute to the UDP-N-acetyl-alpha-D-glucosamine site.

Belongs to the glycosyltransferase 28 family. MurG subfamily.

It is found in the cell inner membrane. It catalyses the reaction di-trans,octa-cis-undecaprenyl diphospho-N-acetyl-alpha-D-muramoyl-L-alanyl-D-glutamyl-meso-2,6-diaminopimeloyl-D-alanyl-D-alanine + UDP-N-acetyl-alpha-D-glucosamine = di-trans,octa-cis-undecaprenyl diphospho-[N-acetyl-alpha-D-glucosaminyl-(1-&gt;4)]-N-acetyl-alpha-D-muramoyl-L-alanyl-D-glutamyl-meso-2,6-diaminopimeloyl-D-alanyl-D-alanine + UDP + H(+). The protein operates within cell wall biogenesis; peptidoglycan biosynthesis. Functionally, cell wall formation. Catalyzes the transfer of a GlcNAc subunit on undecaprenyl-pyrophosphoryl-MurNAc-pentapeptide (lipid intermediate I) to form undecaprenyl-pyrophosphoryl-MurNAc-(pentapeptide)GlcNAc (lipid intermediate II). The sequence is that of UDP-N-acetylglucosamine--N-acetylmuramyl-(pentapeptide) pyrophosphoryl-undecaprenol N-acetylglucosamine transferase from Cupriavidus pinatubonensis (strain JMP 134 / LMG 1197) (Cupriavidus necator (strain JMP 134)).